The following is a 150-amino-acid chain: Lipoprotein signal peptidase (150 aa).

3 consecutive transmembrane segments (helical) span residues 5 to 25, 59 to 79, and 83 to 103; these read LSLV…NWVV, QQWF…WFLW, and GQNW…GNFI. Catalysis depends on residues Asp-113 and Asp-129. Residues 124–144 traverse the membrane as a helical segment; sequence IFNIADILLSVGFVVLFIAIL.

It belongs to the peptidase A8 family.

The protein resides in the cell membrane. It catalyses the reaction Release of signal peptides from bacterial membrane prolipoproteins. Hydrolyzes -Xaa-Yaa-Zaa-|-(S,diacylglyceryl)Cys-, in which Xaa is hydrophobic (preferably Leu), and Yaa (Ala or Ser) and Zaa (Gly or Ala) have small, neutral side chains.. Its pathway is protein modification; lipoprotein biosynthesis (signal peptide cleavage). Functionally, this protein specifically catalyzes the removal of signal peptides from prolipoproteins. This Lactococcus lactis subsp. cremoris (strain MG1363) protein is Lipoprotein signal peptidase.